The chain runs to 339 residues: DNA-directed RNA polymerase subunit alpha (339 aa).

An alpha N-terminal domain (alpha-NTD) region spans residues M1 to E233. An alpha C-terminal domain (alpha-CTD) region spans residues I267–F339.

The protein belongs to the RNA polymerase alpha chain family. In plastids the minimal PEP RNA polymerase catalytic core is composed of four subunits: alpha, beta, beta', and beta''. When a (nuclear-encoded) sigma factor is associated with the core the holoenzyme is formed, which can initiate transcription.

It localises to the plastid. It is found in the chloroplast. The enzyme catalyses RNA(n) + a ribonucleoside 5'-triphosphate = RNA(n+1) + diphosphate. DNA-dependent RNA polymerase catalyzes the transcription of DNA into RNA using the four ribonucleoside triphosphates as substrates. The protein is DNA-directed RNA polymerase subunit alpha of Populus trichocarpa (Western balsam poplar).